A 47-amino-acid chain; its full sequence is Rhodotorucin-A peptides type 3 (47 aa).

A propeptide spanning residues 1–3 (MVA) is cleaved from the precursor. Cysteine 14 carries S-farnesyl cysteine lipidation. Positions 15–18 (TVAK) are excised as a propeptide. Residue cysteine 29 is the site of S-farnesyl cysteine attachment. The propeptide occupies 30–33 (TVSK). Residue cysteine 44 is the site of S-farnesyl cysteine attachment. Residues 45–47 (TVA) constitute a propeptide that is removed on maturation.

The protein resides in the cell membrane. In terms of biological role, rhodotorucin-A is a mating pheromone in cells of mating type A of Rhodosporidium toruloides. This Rhodotorula toruloides (Yeast) protein is Rhodotorucin-A peptides type 3 (RHA3).